Reading from the N-terminus, the 788-residue chain is Endonuclease MutS2 (788 aa).

332–339 (GPNTGGKT) is an ATP binding site. The region spanning 713-788 (VDLRGMDAEE…GTGVTVVEIK (76 aa)) is the Smr domain.

This sequence belongs to the DNA mismatch repair MutS family. MutS2 subfamily. Homodimer. Binds to stalled ribosomes, contacting rRNA.

Endonuclease that is involved in the suppression of homologous recombination and thus may have a key role in the control of bacterial genetic diversity. Its function is as follows. Acts as a ribosome collision sensor, splitting the ribosome into its 2 subunits. Detects stalled/collided 70S ribosomes which it binds and splits by an ATP-hydrolysis driven conformational change. Acts upstream of the ribosome quality control system (RQC), a ribosome-associated complex that mediates the extraction of incompletely synthesized nascent chains from stalled ribosomes and their subsequent degradation. Probably generates substrates for RQC. The chain is Endonuclease MutS2 from Clostridium botulinum (strain 657 / Type Ba4).